The primary structure comprises 80 residues: Nuclear protein 1 (80 aa).

Disordered stretches follow at residues 1-21 (MATL…EDED) and 38-80 (VGGG…KAWR). Over residues 61–80 (GHERKLLTKFQNSERKKAWR) the composition is skewed to basic and acidic residues. Positions 64–80 (RKLLTKFQNSERKKAWR) match the Nuclear localization signal motif.

Belongs to the NUPR family. Monomer. Directly interacts with MSL1 and binds MORF4L1, two components of histone acetyltransferase complex; the interaction with MORF4L1 may be mediated by MSL1. Interacts with EP300; this interaction enhances the effect of EP300 on PAX2 transcription factor activity. Interacts with PAXIP1; this interaction prevents PAXIP1 inhibition of PAX2 transcription factor activity. Interacts with COPS5; this interaction allows COPS5-dependent CDKN1B nuclear to cytoplasm translocation. Interacts with RNF2. Interacts with FOXO3; this interaction represses FOXO3 transactivation. Interacts with PTMA; regulates apoptotic process. Interacts with MYOD1, EP300 and DDX5; this interaction coordinates the association of anti-proliferative and pro-myogenic proteins at the myogenin promoter. Interacts with TP53; interaction is stress-dependent. Forms a complex with EP300 and TP53; this complex binds CDKN1A promoter leading to transcriptional induction of CDKN1A. Phosphorylated. Phosphorylation promotes DNA-binding activity. In terms of processing, acetylated. As to expression, highly expressed in pancreas and both ovaries and testes.

The protein localises to the nucleus. The protein resides in the cytoplasm. Its subcellular location is the perinuclear region. Its function is as follows. Transcription regulator that converts stress signals into a program of gene expression that empowers cells with resistance to the stress induced by a change in their microenvironment. Thereby participates in the regulation of many processes namely cell-cycle, apoptosis, autophagy and DNA repair responses. Controls cell cycle progression and protects cells from genotoxic stress induced by doxorubicin through the complex formation with TP53 and EP300 that binds CDKN1A promoter leading to transcriptional induction of CDKN1A. Protects pancreatic cancer cells from stress-induced cell death by binding the RELB promoter and activating its transcription, leading to IER3 transactivation. Negatively regulates apoptosis through interaction with PTMA. Inhibits autophagy-induced apoptosis in cardiac cells through FOXO3 interaction, inducing cytoplasmic translocation of FOXO3 thereby preventing the FOXO3 association with the pro-autophagic BNIP3 promoter. Inhibits cell growth and facilitates programmed cell death by apoptosis after adriamycin-induced DNA damage through transactivation of TP53. Regulates methamphetamine-induced apoptosis and autophagy through DDIT3-mediated endoplasmic reticulum stress pathway. Participates in DNA repair following gamma-irradiation by facilitating DNA access of the transcription machinery through interaction with MSL1 leading to inhibition of histone H4' Lys-16' acetylation (H4K16ac). Coactivator of PAX2 transcription factor activity, both by recruiting the EP300 cofactor to increase PAX2 transcription factor activity and by binding PAXIP1 to suppress PAXIP1-induced inhibition on PAX2. Positively regulates cell cycle progression through interaction with COPS5 inducing cytoplasmic translocation of CDKN1B leading to the CDKN1B degradation. Coordinates, through its interaction with EP300, the assiociation of MYOD1, EP300 and DDX5 to the MYOG promoter, leading to inhibition of cell-cycle progression and myogenic differentiation promotion. Negatively regulates beta cell proliferation via inhibition of cell-cycle regulatory genes expression through the suppression of their promoter activities. Also required for LHB expression and ovarian maturation. Exacerbates CNS inflammation and demyelination upon cuprizone treatment. The protein is Nuclear protein 1 of Mus musculus (Mouse).